The primary structure comprises 669 residues: MKIFVGNVDGADTTPEELAALFAPYGTVMSCAVMKQFAFVHMRENAGALRAIEALHGHELRPGRALVVEMSRPRPLNTWKIFVGNVSAACTSQELRSLFERRGRVIECDVVKDYAFVHMEKEADAKAAIAQLNGKEVKGKRINVELSTKGQKKGPGLAVQSGDKTKKPGAGDTAFPGTGGFSATFDYQQAFGNSTGGFDGQARQPTPPFFGRDRSPLRRSPPRASYVAPLTAQPATYRAQPSVSLGAAYRAQPSASLGVGYRTQPMTAQAASYRAQPSVSLGAPYRGQLASPSSQSAAASSLGPYGGAQPSASALSSYGGQAAAASSLNSYGAQGSSLASYGNQPSSYGAQAASSYGVRAAASSYNTQGAASSLGSYGAQAASYGAQSAASSLAYGAQAASYNAQPSASYNAQSAPYAAQQAASYSSQPAAYVAQPATAAAYASQPAAYAAQATTPMAGSYGAQPVVQTQLNSYGAQASMGLSGSYGAQSAAAATGSYGAAAAYGAQPSATLAAPHRTQSSASLAASYAAQQHPQAAASYRGQPGNAYDGAGQPSAAYLSMSQGAVANANSTPPPYERTRLSPPRASYDDPYKKAVAMSKRYGSDRRLAELSDYRRLSESQLSFRRSPTKSSLDYRRLPDAHSDYARYSGSYNDYLRAAQMHSGYQRRM.

RRM domains follow at residues 1-73 (MKIF…MSRP) and 79-149 (WKIF…LSTK). Glycyl lysine isopeptide (Lys-Gly) (interchain with G-Cter in SUMO2) cross-links involve residues lysine 126, lysine 135, lysine 138, lysine 149, and lysine 153. Disordered regions lie at residues 147 to 175 (STKG…DTAF) and 193 to 232 (NSTG…PLTA). Phosphoserine is present on serine 161. Lysine 164 carries the N6-acetyllysine; alternate modification. Lysine 164 participates in a covalent cross-link: Glycyl lysine isopeptide (Lys-Gly) (interchain with G-Cter in SUMO2); alternate. Threonine 206 is modified (phosphothreonine). Phosphoserine occurs at positions 220, 242, 244, 256, 272, and 280. Positions 284–303 (PYRGQLASPSSQSAAASSLG) are disordered. The span at 287 to 303 (GQLASPSSQSAAASSLG) shows a compositional bias: low complexity. A TRBP-interacting domain; interaction with STIL region spans residues 307 to 354 (GAQPSASALSSYGGQAAAASSLNSYGAQGSSLASYGNQPSSYGAQAAS). Phosphoserine is present on residues serine 520, serine 523, serine 527, and serine 562. Residues 566–592 (VANANSTPPPYERTRLSPPRASYDDPY) are disordered. Threonine 572 carries the post-translational modification Phosphothreonine. Serine 582 is modified (phosphoserine). A Glycyl lysine isopeptide (Lys-Gly) (interchain with G-Cter in SUMO2) cross-link involves residue lysine 600. Phosphoserine is present on residues serine 618, serine 620, serine 623, serine 627, serine 643, and serine 649.

As to quaternary structure, interacts with NCOA6, CITED1 and XRCC5/KU86. Interacts with SS18. Interacts with STIL and interferes with its interaction with CPAP. Interacts with gamma-tubulin. Part of the HDP-RNP complex composed of at least HEXIM1, PRKDC, XRCC5, XRCC6, paraspeckle proteins (SFPQ, NONO, PSPC1, RBM14, and MATR3) and NEAT1 RNA.

Its subcellular location is the nucleus. The protein resides in the nucleolus. It localises to the cytoplasm. Functionally, may function as a nuclear receptor coactivator, enhancing transcription through other coactivators such as NCOA6 and CITED1. Regulates centriole biogenesis by suppressing the formation of aberrant centriolar protein complexes in the cytoplasm and thus preserving mitotic spindle integrity. Prevents the formation of the STIL-CPAP complex (which can induce the formation of aberrant centriolar protein complexes) by interfering with the interaction of STIL with CPAP. Plays a role in the regulation of DNA virus-mediated innate immune response by assembling into the HDP-RNP complex, a complex that serves as a platform for IRF3 phosphorylation and subsequent innate immune response activation through the cGAS-STING pathway. In Pongo abelii (Sumatran orangutan), this protein is RNA-binding protein 14 (RBM14).